The sequence spans 389 residues: Chalcone synthase 1 (389 aa).

C164 is an active-site residue.

This sequence belongs to the thiolase-like superfamily. Chalcone/stilbene synthases family.

It catalyses the reaction (E)-4-coumaroyl-CoA + 3 malonyl-CoA + 3 H(+) = 2',4,4',6'-tetrahydroxychalcone + 3 CO2 + 4 CoA. It functions in the pathway secondary metabolite biosynthesis; flavonoid biosynthesis. In terms of biological role, the primary product of this enzyme is 4,2',4',6'-tetrahydroxychalcone (also termed naringenin-chalcone or chalcone) which can under specific conditions spontaneously isomerize into naringenin. In Daucus carota (Wild carrot), this protein is Chalcone synthase 1 (CHS1).